Reading from the N-terminus, the 380-residue chain is Cytochrome b (380 aa).

Transmembrane regions (helical) follow at residues 34 to 54 (FGSLLGICLMTQILTGLLLAT), 78 to 99 (WLIRNLHANGASFFFICIYLHI), 114 to 134 (WNTGVILLLTLMATAFVGYVL), and 179 to 199 (FFALHFLLPFMIAGLTTIHLT). Heme b-binding residues include His-84 and His-98. His-183 and His-197 together coordinate heme b. His-202 serves as a coordination point for a ubiquinone. A run of 4 helical transmembrane segments spans residues 227-247 (LKDILGFTLMLLPLTILALFS), 289-309 (LGGVLALAASVLILFLTPFLH), 321-341 (ISQLLFWILVTNLLILTWVGS), and 348-368 (FIIIGQLASITYFTILLILFP).

The protein belongs to the cytochrome b family. As to quaternary structure, the cytochrome bc1 complex contains 11 subunits: 3 respiratory subunits (MT-CYB, CYC1 and UQCRFS1), 2 core proteins (UQCRC1 and UQCRC2) and 6 low-molecular weight proteins (UQCRH/QCR6, UQCRB/QCR7, UQCRQ/QCR8, UQCR10/QCR9, UQCR11/QCR10 and a cleavage product of UQCRFS1). This cytochrome bc1 complex then forms a dimer. It depends on heme b as a cofactor.

The protein resides in the mitochondrion inner membrane. Its function is as follows. Component of the ubiquinol-cytochrome c reductase complex (complex III or cytochrome b-c1 complex) that is part of the mitochondrial respiratory chain. The b-c1 complex mediates electron transfer from ubiquinol to cytochrome c. Contributes to the generation of a proton gradient across the mitochondrial membrane that is then used for ATP synthesis. The chain is Cytochrome b (MT-CYB) from Pelecanoides magellani (Magellanic diving petrel).